The following is a 130-amino-acid chain: Small ribosomal subunit protein uS8A (130 aa).

It belongs to the universal ribosomal protein uS8 family.

This Drosophila melanogaster (Fruit fly) protein is Small ribosomal subunit protein uS8A (RpS15Aa).